A 209-amino-acid chain; its full sequence is Ribosomal RNA small subunit methyltransferase G (209 aa).

Residues Gly71, Phe76, 122-123, and Arg135 contribute to the S-adenosyl-L-methionine site; that span reads AE.

The protein belongs to the methyltransferase superfamily. RNA methyltransferase RsmG family.

The protein localises to the cytoplasm. Specifically methylates the N7 position of a guanine in 16S rRNA. The protein is Ribosomal RNA small subunit methyltransferase G of Phocaeicola vulgatus (strain ATCC 8482 / DSM 1447 / JCM 5826 / CCUG 4940 / NBRC 14291 / NCTC 11154) (Bacteroides vulgatus).